The sequence spans 370 residues: 2-aminoethylphosphonate--pyruvate transaminase 2 (370 aa).

Residue lysine 194 is modified to N6-(pyridoxal phosphate)lysine.

It belongs to the class-V pyridoxal-phosphate-dependent aminotransferase family. PhnW subfamily. In terms of assembly, homodimer. Pyridoxal 5'-phosphate is required as a cofactor.

It catalyses the reaction (2-aminoethyl)phosphonate + pyruvate = phosphonoacetaldehyde + L-alanine. Its function is as follows. Involved in phosphonate degradation. The protein is 2-aminoethylphosphonate--pyruvate transaminase 2 of Paraburkholderia xenovorans (strain LB400).